We begin with the raw amino-acid sequence, 396 residues long: Acetate kinase (396 aa).

Asn-8 is a binding site for Mg(2+). Lys-15 lines the ATP pocket. Arg-89 serves as a coordination point for substrate. Asp-146 acts as the Proton donor/acceptor in catalysis. Residues 206 to 210 (HLGNG), 280 to 282 (DMR), and 328 to 332 (GVGEN) each bind ATP. Glu-382 serves as a coordination point for Mg(2+).

It belongs to the acetokinase family. In terms of assembly, homodimer. The cofactor is Mg(2+). Mn(2+) serves as cofactor.

Its subcellular location is the cytoplasm. It carries out the reaction acetate + ATP = acetyl phosphate + ADP. Its pathway is metabolic intermediate biosynthesis; acetyl-CoA biosynthesis; acetyl-CoA from acetate: step 1/2. Its function is as follows. Catalyzes the formation of acetyl phosphate from acetate and ATP. Can also catalyze the reverse reaction. This is Acetate kinase from Clavibacter sepedonicus (Clavibacter michiganensis subsp. sepedonicus).